We begin with the raw amino-acid sequence, 418 residues long: MFSPKIIILSTGSELTSGRSQDTNSSWIANELFGIGFTVSKLVVLPDDPEAILEELRTLVSLATKKNPVLLIMTGGLGPTEDDYTLEVVCKLKGVSSVESVVARQRIEAFYKLRGKNFQESLQTAIRQISVPKDSTILNNEVGIAPGFIVSLGENAHLGCMPGVPGEMTEMFREEFSTWILKKYSTRELHSGFRFIWWMSESQFQKEFISKEESVTSEKVIWGVAAKRGYIRVSFQSNERALVDFLLKKLDEIYGPKSTLDVFEELPKLLIEKKITVGTAESCTGGLISKIFTDKPGSSTYFYGGVISYDNGVKEGILGVKKNTLKEFGAVSMETAKEMAEGALVALGVDYSISVTGIAGPGGGTPQKKVGLVYFGIGQKNEKTETHEHYFPFPRSSFREFAAHTGIYLLYNRLKRLA.

Belongs to the CinA family.

This chain is CinA-like protein, found in Leptospira interrogans serogroup Icterohaemorrhagiae serovar Lai (strain 56601).